The chain runs to 295 residues: Beta-chimaerin (295 aa).

The Phorbol-ester/DAG-type zinc finger occupies 41-91 (THNFKVHTFRGPHWCEYCANFMWGLIAQGVRCSDCGLNVHKQCSKHVPNDC). In terms of domain architecture, Rho-GAP spans 104 to 295 (CDLTTLVKAH…ILIENEDVLF (192 aa)).

As to expression, found in cerebellum and testis.

The protein resides in the membrane. With respect to regulation, in the inactive state, the N terminus protrudes into the active site of the Rho-GAP domain, sterically blocking Rac binding. Phospholipid binding to the Phorbol-ester/DAG-type zinc-finger/C1 domain triggers the cooperative dissociation of these interactions, allowing the N-terminus to move out of the active site and thereby activating the enzyme. Its function is as follows. GTPase-activating protein for p21-rac. The sequence is that of Beta-chimaerin (Chn2) from Rattus norvegicus (Rat).